Reading from the N-terminus, the 437-residue chain is Serine--tRNA ligase (437 aa).

244-246 contributes to the L-serine binding site; that stretch reads TAE. Residue 275 to 277 coordinates ATP; sequence RSE. Position 298 (E298) interacts with L-serine. 362 to 365 contacts ATP; that stretch reads EISS. S397 is a binding site for L-serine.

This sequence belongs to the class-II aminoacyl-tRNA synthetase family. Type-1 seryl-tRNA synthetase subfamily. As to quaternary structure, homodimer. The tRNA molecule binds across the dimer.

It localises to the cytoplasm. It carries out the reaction tRNA(Ser) + L-serine + ATP = L-seryl-tRNA(Ser) + AMP + diphosphate + H(+). It catalyses the reaction tRNA(Sec) + L-serine + ATP = L-seryl-tRNA(Sec) + AMP + diphosphate + H(+). Its pathway is aminoacyl-tRNA biosynthesis; selenocysteinyl-tRNA(Sec) biosynthesis; L-seryl-tRNA(Sec) from L-serine and tRNA(Sec): step 1/1. In terms of biological role, catalyzes the attachment of serine to tRNA(Ser). Is also able to aminoacylate tRNA(Sec) with serine, to form the misacylated tRNA L-seryl-tRNA(Sec), which will be further converted into selenocysteinyl-tRNA(Sec). In Nitrosomonas eutropha (strain DSM 101675 / C91 / Nm57), this protein is Serine--tRNA ligase.